The following is a 140-amino-acid chain: Large ribosomal subunit protein uL16 (140 aa).

Over residues 1–14 (MLMPKKVKHRKQMK) the composition is skewed to basic residues. A disordered region spans residues 1–20 (MLMPKKVKHRKQMKGRMSGT).

It belongs to the universal ribosomal protein uL16 family. Part of the 50S ribosomal subunit.

Functionally, binds 23S rRNA and is also seen to make contacts with the A and possibly P site tRNAs. The protein is Large ribosomal subunit protein uL16 of Geotalea daltonii (strain DSM 22248 / JCM 15807 / FRC-32) (Geobacter daltonii).